The primary structure comprises 722 residues: DUF724 domain-containing protein 7 (722 aa).

The tract at residues 424 to 449 (KTTPKKKLQAMKNQKSSTNDSVGEKV) is disordered. Residues 434–444 (MKNQKSSTNDS) are compositionally biased toward polar residues. Positions 540–720 (VLPFVKKSQL…HEFQAILAAP (181 aa)) constitute a DUF724 domain. Positions 645–712 (CALEELKAVE…DQEVQNVDHE (68 aa)) form a coiled coil.

Homodimer. Interacts wtih ABAP1, ARIA and LHP1. Interacts with the non-modified histones H1, H2B, H3 and H4. As to expression, expressed in roots, leaves, stems and flowers.

Its subcellular location is the nucleus. May act as a link between DNA replication, transcription and chromatin remodeling during flower development. May participate in the repression of LHP1-targeted genes during flower development by direct interaction with LHP1. May be involved in the polar growth of plant cells via transportation of RNAs. The polypeptide is DUF724 domain-containing protein 7 (Arabidopsis thaliana (Mouse-ear cress)).